We begin with the raw amino-acid sequence, 255 residues long: Cell division protein DivIB (255 aa).

Topologically, residues 1–30 (MKNSKVIKLQDRVPKLKNQKKRNKPPVNHR) are cytoplasmic. The chain crosses the membrane as a helical span at residues 31 to 51 (LILYISILFLLVLFLIYFRSP). Residues 52–255 (LSNIKKISVF…FKYLDDEKKK (204 aa)) lie on the Extracellular side of the membrane. Residues 53–121 (SNIKKISVFG…NKIDIHIEEY (69 aa)) enclose the POTRA domain.

This sequence belongs to the FtsQ/DivIB family. DivIB subfamily.

The protein resides in the cell membrane. Cell division protein that may be involved in stabilizing or promoting the assembly of the division complex. The protein is Cell division protein DivIB of Bacillus cytotoxicus (strain DSM 22905 / CIP 110041 / 391-98 / NVH 391-98).